A 962-amino-acid chain; its full sequence is Glycine dehydrogenase (decarboxylating) (962 aa).

K709 is subject to N6-(pyridoxal phosphate)lysine.

It belongs to the GcvP family. As to quaternary structure, the glycine cleavage system is composed of four proteins: P, T, L and H. The cofactor is pyridoxal 5'-phosphate.

It carries out the reaction N(6)-[(R)-lipoyl]-L-lysyl-[glycine-cleavage complex H protein] + glycine + H(+) = N(6)-[(R)-S(8)-aminomethyldihydrolipoyl]-L-lysyl-[glycine-cleavage complex H protein] + CO2. Its function is as follows. The glycine cleavage system catalyzes the degradation of glycine. The P protein binds the alpha-amino group of glycine through its pyridoxal phosphate cofactor; CO(2) is released and the remaining methylamine moiety is then transferred to the lipoamide cofactor of the H protein. The chain is Glycine dehydrogenase (decarboxylating) from Shewanella putrefaciens (strain CN-32 / ATCC BAA-453).